The following is a 411-amino-acid chain: MEEKEGIKDSSLLEKSNVPESINEDISKTTDVDLNSDGKKDNDTSAKDGTPKVEEKVNKSSGIDEDEVVTPAEDAKEEEEEHPPLPARRKSEEEPSKENPILQELKDAFPNLEEKYIKAVIIASQGVLSPAFNALLFLSDPESGKDIELPTQPVRKNPEAPARRRQTQLEQDELLARQLDEQFNSSHSRRRNRDRATRSMHEQRRRRHNPNEREQHHEDSEEEDSWSQFVEKDLPELTDRAGRSLQDTANKVSNWISDAYRRNFASGNEQNDNQHGHQDQQEWEPEIVDLSQGGKNSRPQQPERRRFNSFGVQVGDDSLESHGITLHNEDGFEDDEDVPPQLPTRTKSGESTGKVVAETTYIDTPDTETKKKWQPLPPEPLDTTPTKVNAVSRNKKNPDEDEFLINSDDEM.

Basic and acidic residues predominate over residues 1–12 (MEEKEGIKDSSL). 2 disordered regions span residues 1–102 (MEEK…NPIL) and 142–411 (ESGK…DDEM). Lysine 15 is covalently cross-linked (Glycyl lysine isopeptide (Lys-Gly) (interchain with G-Cter in ubiquitin)). Phosphoserine occurs at positions 21 and 36. Positions 25–58 (DISKTTDVDLNSDGKKDNDTSAKDGTPKVEEKVN) are enriched in basic and acidic residues. Lysine 59 is covalently cross-linked (Glycyl lysine isopeptide (Lys-Gly) (interchain with G-Cter in ubiquitin)). Threonine 70 carries the phosphothreonine modification. A Glycyl lysine isopeptide (Lys-Gly) (interchain with G-Cter in ubiquitin) cross-link involves residue lysine 76. At serine 91 the chain carries Phosphoserine. A CUE domain is found at 97–140 (KENPILQELKDAFPNLEEKYIKAVIIASQGVLSPAFNALLFLSD). A Glycyl lysine isopeptide (Lys-Gly) (interchain with G-Cter in ubiquitin) cross-link involves residue lysine 156. At threonine 167 the chain carries Phosphothreonine. Positions 209–219 (NPNEREQHHED) are enriched in basic and acidic residues. Position 220 is a phosphoserine (serine 220). Basic and acidic residues predominate over residues 230–242 (VEKDLPELTDRAG). The segment covering 245–256 (LQDTANKVSNWI) has biased composition (polar residues). Residues serine 309 and serine 318 each carry the phosphoserine modification. Threonine 346 carries the phosphothreonine modification. Serine 348 bears the Phosphoserine mark. The residue at position 352 (threonine 352) is a Phosphothreonine. Lysine 354 participates in a covalent cross-link: Glycyl lysine isopeptide (Lys-Gly) (interchain with G-Cter in ubiquitin). 2 positions are modified to phosphothreonine: threonine 364 and threonine 367. The AIM motif lies at 373–376 (WQPL). Residue lysine 396 forms a Glycyl lysine isopeptide (Lys-Gly) (interchain with G-Cter in ubiquitin) linkage. A compositionally biased stretch (acidic residues) spans 399–411 (DEDEFLINSDDEM). The residue at position 407 (serine 407) is a Phosphoserine.

In terms of assembly, interacts with ATG8 (via AIM motif), CLB2, and ubiquitin (via CUE domain).

It localises to the cytoplasm. Connects the ubiquitin pathway to autophagy by functioning as a ubiquitin-ATG8 adapter and thus mediating autophagic clearance of ubiquitin conjugates under starvation conditions. The CUE5-dependent selective autophagy pathway plays an important role in clearance of cytotoxic protein aggregates. Not required for cytoplasmic to vacuole pathway (cvt), mitophagy, pexophagy, or ribophagy. The protein is Ubiquitin-binding protein CUE5 of Saccharomyces cerevisiae (strain ATCC 204508 / S288c) (Baker's yeast).